The chain runs to 318 residues: Nodulation protein D 2 (318 aa).

In terms of domain architecture, HTH lysR-type spans 6 to 63; the sequence is LDLNLLVALDALTTERNLTAAARSINLSQPAMSAAIGRLRDYFRDELFTMNGRELRLT. The H-T-H motif DNA-binding region spans 23–42; the sequence is LTAAARSINLSQPAMSAAIG.

The protein belongs to the LysR transcriptional regulatory family.

In terms of biological role, nodD regulates the expression of the nodABCFE genes which encode other nodulation proteins. NodD is also a negative regulator of its own expression. Binds flavonoids as inducers. The polypeptide is Nodulation protein D 2 (nodD2) (Rhizobium leguminosarum bv. phaseoli).